The following is a 390-amino-acid chain: Carbamoyl phosphate synthase small chain (390 aa).

Positions 1–198 (MTSTPTPTPT…LGEGYAVGPE (198 aa)) are CPSase. L-glutamine contacts are provided by Ser53, Gly250, and Gly252. Residues 202–390 (RVVVLDYGVK…VGELKGRVEA (189 aa)) form the Glutamine amidotransferase type-1 domain. Cys279 serves as the catalytic Nucleophile. L-glutamine contacts are provided by Leu280, Gln283, Asn321, Gly323, and Phe324. Residues His363 and Glu365 contribute to the active site.

Belongs to the CarA family. Composed of two chains; the small (or glutamine) chain promotes the hydrolysis of glutamine to ammonia, which is used by the large (or ammonia) chain to synthesize carbamoyl phosphate. Tetramer of heterodimers (alpha,beta)4.

It catalyses the reaction hydrogencarbonate + L-glutamine + 2 ATP + H2O = carbamoyl phosphate + L-glutamate + 2 ADP + phosphate + 2 H(+). The catalysed reaction is L-glutamine + H2O = L-glutamate + NH4(+). Its pathway is amino-acid biosynthesis; L-arginine biosynthesis; carbamoyl phosphate from bicarbonate: step 1/1. The protein operates within pyrimidine metabolism; UMP biosynthesis via de novo pathway; (S)-dihydroorotate from bicarbonate: step 1/3. In terms of biological role, small subunit of the glutamine-dependent carbamoyl phosphate synthetase (CPSase). CPSase catalyzes the formation of carbamoyl phosphate from the ammonia moiety of glutamine, carbonate, and phosphate donated by ATP, constituting the first step of 2 biosynthetic pathways, one leading to arginine and/or urea and the other to pyrimidine nucleotides. The small subunit (glutamine amidotransferase) binds and cleaves glutamine to supply the large subunit with the substrate ammonia. The chain is Carbamoyl phosphate synthase small chain from Maricaulis maris (strain MCS10) (Caulobacter maris).